Reading from the N-terminus, the 354-residue chain is Multiple sugar-binding periplasmic receptor ChvE (354 aa).

Residues 1–25 (MKSIISLTAAAAIGVAMFVAPAFAA) form the signal peptide.

Belongs to the bacterial solute-binding protein 2 family.

The protein localises to the periplasm. Functionally, required for effective transcriptional induction of the vir genes by monosaccharides in response to plant signals and for normal growth and chemotaxis towards certain sugars. Functions as a periplasmic multiple sugar-binding receptor protein. It does not interact with a transport system. This chain is Multiple sugar-binding periplasmic receptor ChvE (chvE), found in Rhizobium radiobacter (Agrobacterium tumefaciens).